Here is a 44-residue protein sequence, read N- to C-terminus: uncharacterized protein (44 aa).

This is an uncharacterized protein from Bacillus phage phi105 (Bacteriophage phi-105).